Consider the following 602-residue polypeptide: UvrABC system protein C (602 aa).

Residues 17 to 94 (KTSGCYKMYS…IKKYKPTYNI (78 aa)) form the GIY-YIG domain. In terms of domain architecture, UVR spans 199–234 (SKLLNDIEIKMKEVIMKENFEAAIKLKETKKSLIEI).

Belongs to the UvrC family. As to quaternary structure, interacts with UvrB in an incision complex.

It is found in the cytoplasm. The UvrABC repair system catalyzes the recognition and processing of DNA lesions. UvrC both incises the 5' and 3' sides of the lesion. The N-terminal half is responsible for the 3' incision and the C-terminal half is responsible for the 5' incision. The polypeptide is UvrABC system protein C (Borrelia duttonii (strain Ly)).